A 562-amino-acid chain; its full sequence is Protein FAM222B (562 aa).

2 stretches are compositionally biased toward low complexity: residues 155-167 and 183-201; these read QQAL…LAHA and ALSH…HPQP. 3 disordered regions span residues 155–203, 219–245, and 537–562; these read QQAL…QPMA, LQHP…VTVS, and AHRA…PGYR.

It belongs to the FAM222 family.

This chain is Protein FAM222B (FAM222B), found in Homo sapiens (Human).